We begin with the raw amino-acid sequence, 723 residues long: Transcription factor E2F7 (723 aa).

The interval 121-146 (AEEEEEEELDDSCQYEALDESERRPS) is disordered. The span at 122–139 (EEEEEEELDDSCQYEALD) shows a compositional bias: acidic residues. 2 DNA-binding regions span residues 147-216 (RKQK…VWHG) and 264-349 (RKDK…KWIG). Polar residues-rich tracts occupy residues 356 to 370 (SSNS…SNSG) and 395 to 405 (LISSAPSTPHR). Disordered stretches follow at residues 356–379 (SSNS…KMAR), 395–417 (LISS…YSRK), 489–546 (SLRK…ASFG), 650–689 (EHHG…SKSF), and 702–723 (QSAA…TAAN). Positions 494–503 (ERSEEDDHQT) are enriched in basic and acidic residues. Positions 520 to 535 (SESLSSSTRRSPVCSP) are enriched in low complexity.

Belongs to the E2F/DP family. In terms of assembly, homodimer and heterodimer: mainly forms homodimers and, to a lesser extent, heterodimers with e2f8.

It localises to the nucleus. In terms of biological role, atypical E2F transcription factor that participates in various processes such as angiogenesis and polyploidization of specialized cells. Mainly acts as a transcription repressor that binds DNA independently of DP proteins and specifically recognizes the E2 recognition site 5'-TTTC[CG]CGC-3'. Directly represses transcription of classical E2F transcription factors such as e2f1. Acts as a regulator of S-phase by recognizing and binding the E2-related site 5'-TTCCCGCC-3' and mediating repression of G1/S-regulated genes. Acts as a promoter of sprouting angiogenesis, possibly by acting as a transcription activator and promoting expression of vegfa. This is Transcription factor E2F7 (e2f7) from Danio rerio (Zebrafish).